Consider the following 50-residue polypeptide: Small nuclear ribonucleoprotein Sm D2 (50 aa).

Positions 1-36 (MSLLNKPKSEMTPEELQKREEEEFNTGPLSVXTQSX) are disordered. Ser-2 is modified (N-acetylserine). Residues Lys-6 and Lys-8 each participate in a glycyl lysine isopeptide (Lys-Gly) (interchain with G-Cter in SUMO2) cross-link. Basic and acidic residues predominate over residues 7–21 (PKSEMTPEELQKREE). Ser-9 bears the Phosphoserine mark. At Thr-12 the chain carries Phosphothreonine.

The protein belongs to the snRNP core protein family. Core component of the spliceosomal U1, U2, U4 and U5 small nuclear ribonucleoproteins (snRNPs), the building blocks of the spliceosome. Most spliceosomal snRNPs contain a common set of Sm proteins, SNRPB, SNRPD1, SNRPD2, SNRPD3, SNRPE, SNRPF and SNRPG that assemble in a heptameric protein ring on the Sm site of the small nuclear RNA to form the core snRNP. Component of the U1 snRNP. The U1 snRNP is composed of the U1 snRNA and the 7 core Sm proteins SNRPB, SNRPD1, SNRPD2, SNRPD3, SNRPE, SNRPF and SNRPG, and at least three U1 snRNP-specific proteins SNRNP70/U1-70K, SNRPA/U1-A and SNRPC/U1-C. Component of the U4/U6-U5 tri-snRNP complex composed of the U4, U6 and U5 snRNAs and at least PRPF3, PRPF4, PRPF6, PRPF8, PRPF31, SNRNP200, TXNL4A, SNRNP40, SNRPB, SNRPD1, SNRPD2, SNRPD3, SNRPE, SNRPF, SNRPG, DDX23, CD2BP2, PPIH, SNU13, EFTUD2, SART1 and USP39, plus LSM2, LSM3, LSM4, LSM5, LSM6, LSM7 and LSM8. Component of the minor spliceosome, which splices U12-type introns. Part of the SMN-Sm complex that contains SMN1, GEMIN2/SIP1, DDX20/GEMIN3, GEMIN4, GEMIN5, GEMIN6, GEMIN7, GEMIN8, STRAP/UNRIP and the Sm proteins SNRPB, SNRPD1, SNRPD2, SNRPD3, SNRPE, SNRPF and SNRPG; catalyzes core snRNPs assembly. Forms a 6S pICln-Sm complex composed of CLNS1A/pICln, SNRPD1, SNRPD2, SNRPE, SNRPF and SNRPG; ring-like structure where CLNS1A/pICln mimics additional Sm proteins and which is unable to assemble into the core snRNP. Interacts with SMN1; the interaction is direct. Interacts with GEMIN2; the interaction is direct. Interacts with SNRPD1; the interaction is direct. Interacts with SNRPF; the interaction is direct.

Its subcellular location is the cytoplasm. It is found in the cytosol. It localises to the nucleus. Plays a role in pre-mRNA splicing as a core component of the spliceosomal U1, U2, U4 and U5 small nuclear ribonucleoproteins (snRNPs), the building blocks of the spliceosome. Component of both the pre-catalytic spliceosome B complex and activated spliceosome C complexes. As a component of the minor spliceosome, involved in the splicing of U12-type introns in pre-mRNAs. In Sus scrofa (Pig), this protein is Small nuclear ribonucleoprotein Sm D2 (SNRPD2).